The chain runs to 405 residues: MNHLPMPTFGPLAGVRVVFSGIEIAGPFAGQMFAEWGAEVIWIENVAWADTIRVQPNYPQLSRRNLHALSLNIFKDEGREAFLKLMETTDIFIEASKGPAFARRGITDEVLWEHNPKLVIAHLSGFGQYGTEEYTNLPAYNTIAQAFSGYLIQNGDVDQPMPAFPYTADYFSGMTATTAALAALHKVRETGKGESIDIAMYEVMLRMGQYFMMDYFNGGEICPRMTKGKDPYYAGCGLYKCADGYIVMELVGITQINECFKDIGLAHILGTPEVPEGTQLIHRVECPYGPLVEEKLDAWLAAHTIADVQARFAELNIACAKVLTIPELEGNPQYVARESITQWQTMDGRTCKGPNIMPKFKNNPGKIWRGMPSHGMDTAAILKNIGYSEADIKELVGKGLAKVED.

2 residues coordinate CoA: lysine 97 and arginine 104. Aspartate 169 acts as the Nucleophile in catalysis.

It belongs to the CoA-transferase III family. CaiB subfamily. Homodimer.

The protein localises to the cytoplasm. The catalysed reaction is crotonobetainyl-CoA + (R)-carnitine = crotonobetaine + (R)-carnitinyl-CoA. The enzyme catalyses 4-(trimethylamino)butanoyl-CoA + (R)-carnitine = (R)-carnitinyl-CoA + 4-(trimethylamino)butanoate. Its pathway is amine and polyamine metabolism; carnitine metabolism. Its function is as follows. Catalyzes the reversible transfer of the CoA moiety from gamma-butyrobetainyl-CoA to L-carnitine to generate L-carnitinyl-CoA and gamma-butyrobetaine. Is also able to catalyze the reversible transfer of the CoA moiety from gamma-butyrobetainyl-CoA or L-carnitinyl-CoA to crotonobetaine to generate crotonobetainyl-CoA. The sequence is that of L-carnitine CoA-transferase (caiB) from Salmonella typhi.